The sequence spans 485 residues: NADH-quinone oxidoreductase subunit N (485 aa).

14 helical membrane passes run Leu8–Ile28, Phe35–Val55, Gly71–Ala91, Phe105–Leu125, Ser127–Phe147, Tyr159–Ala179, Leu203–Phe223, Pro235–Met255, Val271–Gln291, Leu297–Gln317, Val326–Leu346, Ala373–Ile393, Trp408–Val430, and Ile455–Ile475.

Belongs to the complex I subunit 2 family. NDH-1 is composed of 13 different subunits. Subunits NuoA, H, J, K, L, M, N constitute the membrane sector of the complex.

Its subcellular location is the cell inner membrane. It catalyses the reaction a quinone + NADH + 5 H(+)(in) = a quinol + NAD(+) + 4 H(+)(out). Functionally, NDH-1 shuttles electrons from NADH, via FMN and iron-sulfur (Fe-S) centers, to quinones in the respiratory chain. The immediate electron acceptor for the enzyme in this species is believed to be ubiquinone. Couples the redox reaction to proton translocation (for every two electrons transferred, four hydrogen ions are translocated across the cytoplasmic membrane), and thus conserves the redox energy in a proton gradient. This is NADH-quinone oxidoreductase subunit N from Escherichia coli O1:K1 / APEC.